The chain runs to 1320 residues: Sal-like protein 3 (1320 aa).

Positions 1–11 are enriched in basic residues; it reads MSRRKQAKPQH. The segment at 1–49 is disordered; sequence MSRRKQAKPQHLKSDEELPPQDGASEHGVPGDGAEDADSGSESRSGSEE. The segment covering 40–49 has biased composition (low complexity); sequence GSESRSGSEE. The C2H2-type 1; atypical zinc finger occupies 51–73; the sequence is SVCEKCCAEFFKWADFLQHKKTC. Disordered regions lie at residues 84–166 and 271–367; these read DDEP…AFSM and LSAG…NLPN. Positions 88 to 100 are enriched in pro residues; the sequence is APPSEDFPEPSPA. Position 109 is a phosphoserine (serine 109). The segment covering 121 to 131 has biased composition (basic and acidic residues); that stretch reads SEVKAATKEAE. Residues 143 to 160 are compositionally biased toward pro residues; sequence PPGPSVPPPPPALPPQPE. The span at 271–289 shows a compositional bias: low complexity; sequence LSAGPATASAGSGSTLPAA. Over residues 295 to 311 the composition is skewed to polar residues; the sequence is HLSQPASGTSTPCSTSA. Composition is skewed to low complexity over residues 323–342 and 355–367; these read STGPAPGAVAAASSTVGNAV and PGPLLSSASNLPN. 2 consecutive C2H2-type zinc fingers follow at residues 427–449 and 455–477; these read HKCRFCAKVFGSDSALQIHLRSH and FKCNICGNRFSTKGNLKVHFQRH. The tract at residues 534–623 is disordered; sequence GLQLPPTVPG…RTGDAPVVGG (90 aa). Over residues 543–554 the composition is skewed to polar residues; that stretch reads GTHNYTDSPSIT. The segment covering 555-568 has biased composition (low complexity); sequence PVSRSPQRPSPASS. Positions 569-583 are enriched in polar residues; sequence ECTSLSPGLNNTESG. 3 consecutive C2H2-type zinc fingers follow at residues 692–714, 720–742, and 752–774; these read NQCVICHRVLSCQSALKMHYRTH, FKCKICGRAFTTKGNLKTHFGVH, and HSCPICQKKFTNAVVLQQHIRMH. Disordered stretches follow at residues 807–846 and 878–972; these read SSFDDDIDENSMEEDSELKDTASDSSKPLLSYSGSCPPSP and VENG…GHPG. A compositionally biased stretch (acidic residues) spans 809–823; the sequence is FDDDIDENSMEEDSE. Low complexity-rich tracts occupy residues 834 to 846 and 902 to 923; these read PLLSYSGSCPPSP and RSAGSPALSESSSSQALSPAHS. Serine 932 is modified (phosphoserine). 4 C2H2-type zinc fingers span residues 997-1019, 1025-1047, 1133-1155, and 1161-1183; these read TVCGVCGKPFACKSALEIHYRSH, FVCTVCRRGCSTMGNLKQHLLTH, HNCQSCGKTFSSASALQIHERTH, and FGCTICGRAFTTKGNLKVHMGTH. Residue serine 1197 is modified to Phosphoserine.

The protein belongs to the sal C2H2-type zinc-finger protein family. As to expression, in adult brain, testis and kidney. In lower levels also in adult ovaries and embryonic stem cells. In embryo in developing neuroectoderm of brain, inner ear and spinal cord. Also weakly and transiently expressed in embryonic branchial arches, notochord, limb buds and heart.

Its subcellular location is the nucleus. In terms of biological role, probable transcription factor. The sequence is that of Sal-like protein 3 (Sall3) from Mus musculus (Mouse).